Consider the following 382-residue polypeptide: Acetylserotonin O-methyltransferase (382 aa).

S-adenosyl-L-homocysteine-binding residues include G218, D241, D261, M262, and K275. H279 functions as the Proton acceptor in the catalytic mechanism. Residues E308 and E347 contribute to the active site.

The protein belongs to the class I-like SAM-binding methyltransferase superfamily. Cation-independent O-methyltransferase family.

The protein localises to the cytoplasm. The catalysed reaction is N-acetylserotonin + S-adenosyl-L-methionine = melatonin + S-adenosyl-L-homocysteine + H(+). Its pathway is aromatic compound metabolism; melatonin biosynthesis; melatonin from serotonin: step 1/2. Methyltransferase which catalyzes the transfer of a methyl group onto N-acetylserotonin, producing melatonin (N-acetyl-5-methoxytryptamine). Does not seem to possess caffeate O-methyltransferase activity. Implicated in melatonin-dependent circadian dynamics of stomatal aperture to minimize night water loss and promote drought tolerance. Prevents seed germination by promoting melatonin biosynthesis. Promotes melatonin-triggered defense responses to the necrotrophic fungus Botrytis cinerea. In terms of biological role, (Microbial infection) Promotes melatonin-triggered defense responses to the necrotrophic fungus Botrytis cinerea. The protein is Acetylserotonin O-methyltransferase of Arabidopsis thaliana (Mouse-ear cress).